Reading from the N-terminus, the 326-residue chain is Protein farnesyltransferase/geranylgeranyltransferase type-1 subunit alpha (326 aa).

PFTA repeat units follow at residues 55–89, 90–124, 126–160, 161–194, and 201–235; these read RSPR…ALNH, DLFE…KLGP, VAGR…ALGG, WEDE…QSPL, and MRES…DDKE.

Belongs to the protein prenyltransferase subunit alpha family. As to quaternary structure, heterodimer of an alpha and a beta subunit. It depends on Mg(2+) as a cofactor.

The enzyme catalyses L-cysteinyl-[protein] + (2E,6E)-farnesyl diphosphate = S-(2E,6E)-farnesyl-L-cysteinyl-[protein] + diphosphate. The catalysed reaction is geranylgeranyl diphosphate + L-cysteinyl-[protein] = S-geranylgeranyl-L-cysteinyl-[protein] + diphosphate. In terms of biological role, essential subunit of both the farnesyltransferase and the geranylgeranyltransferase complex. Contributes to the transfer of a farnesyl or geranylgeranyl moiety from farnesyl or geranylgeranyl diphosphate to a cysteine at the fourth position from the C-terminus of several proteins having the C-terminal sequence Cys-aliphatic-aliphatic-X. In Arabidopsis thaliana (Mouse-ear cress), this protein is Protein farnesyltransferase/geranylgeranyltransferase type-1 subunit alpha (FTA).